The sequence spans 176 residues: Ribosome maturation factor RimP (176 aa).

This sequence belongs to the RimP family.

It localises to the cytoplasm. Its function is as follows. Required for maturation of 30S ribosomal subunits. The sequence is that of Ribosome maturation factor RimP from Mycolicibacterium vanbaalenii (strain DSM 7251 / JCM 13017 / BCRC 16820 / KCTC 9966 / NRRL B-24157 / PYR-1) (Mycobacterium vanbaalenii).